Here is a 616-residue protein sequence, read N- to C-terminus: Dihydroxy-acid dehydratase (616 aa).

Position 81 (Asp81) interacts with Mg(2+). Position 122 (Cys122) interacts with [2Fe-2S] cluster. Residues Asp123 and Lys124 each coordinate Mg(2+). At Lys124 the chain carries N6-carboxylysine. Residue Cys195 coordinates [2Fe-2S] cluster. A Mg(2+)-binding site is contributed by Glu491. Residue Ser517 is the Proton acceptor of the active site.

This sequence belongs to the IlvD/Edd family. As to quaternary structure, homodimer. Requires [2Fe-2S] cluster as cofactor. Mg(2+) is required as a cofactor.

It catalyses the reaction (2R)-2,3-dihydroxy-3-methylbutanoate = 3-methyl-2-oxobutanoate + H2O. It carries out the reaction (2R,3R)-2,3-dihydroxy-3-methylpentanoate = (S)-3-methyl-2-oxopentanoate + H2O. It functions in the pathway amino-acid biosynthesis; L-isoleucine biosynthesis; L-isoleucine from 2-oxobutanoate: step 3/4. The protein operates within amino-acid biosynthesis; L-valine biosynthesis; L-valine from pyruvate: step 3/4. In terms of biological role, functions in the biosynthesis of branched-chain amino acids. Catalyzes the dehydration of (2R,3R)-2,3-dihydroxy-3-methylpentanoate (2,3-dihydroxy-3-methylvalerate) into 2-oxo-3-methylpentanoate (2-oxo-3-methylvalerate) and of (2R)-2,3-dihydroxy-3-methylbutanoate (2,3-dihydroxyisovalerate) into 2-oxo-3-methylbutanoate (2-oxoisovalerate), the penultimate precursor to L-isoleucine and L-valine, respectively. This Erwinia tasmaniensis (strain DSM 17950 / CFBP 7177 / CIP 109463 / NCPPB 4357 / Et1/99) protein is Dihydroxy-acid dehydratase.